Reading from the N-terminus, the 99-residue chain is DNA-directed RNA polymerase subunit omega (99 aa).

This sequence belongs to the RNA polymerase subunit omega family. In terms of assembly, the RNAP catalytic core consists of 2 alpha, 1 beta, 1 beta' and 1 omega subunit. When a sigma factor is associated with the core the holoenzyme is formed, which can initiate transcription.

The catalysed reaction is RNA(n) + a ribonucleoside 5'-triphosphate = RNA(n+1) + diphosphate. Functionally, promotes RNA polymerase assembly. Latches the N- and C-terminal regions of the beta' subunit thereby facilitating its interaction with the beta and alpha subunits. This Deinococcus geothermalis (strain DSM 11300 / CIP 105573 / AG-3a) protein is DNA-directed RNA polymerase subunit omega.